We begin with the raw amino-acid sequence, 394 residues long: Protein maelstrom (394 aa).

A DNA-binding region (HMG box) is located at residues alanine 2–asparagine 69. Positions threonine 44–alanine 93 are disordered. Over residues glutamine 73–alanine 93 the composition is skewed to basic and acidic residues.

This sequence belongs to the maelstrom family.

The protein resides in the cytoplasm. It is found in the nucleus. Its function is as follows. Involved both in the piRNA and miRNA metabolic processes. As a component of the meiotic nuage, plays a central role during oogenesis by repressing transposable elements and preventing their mobilization, which is essential for the germline integrity. Repression of transposable elements is mediated via the piRNA metabolic process, which mediates the repression of transposable elements during meiosis by forming complexes composed of piRNAs and Piwi proteins and governs the repression of transposons. As a nuclear component, it is required for proper differentiation in the germline stem cell (GSC) lineage by repressing microRNA-7 (miR-7), thereby acting as an indirect regulator of bag-of-marbles (Bam). Acts by binding to the promoter of miR-7 gene and repressing its expression; miR-7 repression alleviates the Bam repression by miR-7, thereby allowing differentiation in the germline stem cell (GSC) lineage. The chain is Protein maelstrom (mael) from Drosophila sechellia (Fruit fly).